We begin with the raw amino-acid sequence, 237 residues long: Ribosomal RNA small subunit methyltransferase G (237 aa).

Residues G78, F83, 129 to 130, and R148 each bind S-adenosyl-L-methionine; that span reads AE.

The protein belongs to the methyltransferase superfamily. RNA methyltransferase RsmG family.

The protein localises to the cytoplasm. Functionally, specifically methylates the N7 position of a guanine in 16S rRNA. In Streptococcus equi subsp. zooepidemicus (strain H70), this protein is Ribosomal RNA small subunit methyltransferase G.